The following is a 184-amino-acid chain: Photosystem I assembly protein Ycf4 (184 aa).

2 helical membrane passes run 21–43 and 58–80; these read NFCWAFILFLGSLGFLLVGISSY and LFFPQGIVMSFYGIAGLFISSYL.

This sequence belongs to the Ycf4 family.

It localises to the plastid. The protein localises to the chloroplast thylakoid membrane. In terms of biological role, seems to be required for the assembly of the photosystem I complex. The polypeptide is Photosystem I assembly protein Ycf4 (Carpobrotus chilensis (Sea fig)).